The primary structure comprises 274 residues: Large ribosomal subunit protein uL2 (274 aa).

Disordered regions lie at residues 34–53 (IAPIKNSGGRNSQGKMTMRY) and 216–274 (RRPR…RRKK).

It belongs to the universal ribosomal protein uL2 family. Part of the 50S ribosomal subunit. Forms a bridge to the 30S subunit in the 70S ribosome.

Functionally, one of the primary rRNA binding proteins. Required for association of the 30S and 50S subunits to form the 70S ribosome, for tRNA binding and peptide bond formation. It has been suggested to have peptidyltransferase activity; this is somewhat controversial. Makes several contacts with the 16S rRNA in the 70S ribosome. This Flavobacterium psychrophilum (strain ATCC 49511 / DSM 21280 / CIP 103535 / JIP02/86) protein is Large ribosomal subunit protein uL2.